The chain runs to 119 residues: Ribonuclease P protein component (119 aa).

Belongs to the RnpA family. In terms of assembly, consists of a catalytic RNA component (M1 or rnpB) and a protein subunit.

It catalyses the reaction Endonucleolytic cleavage of RNA, removing 5'-extranucleotides from tRNA precursor.. RNaseP catalyzes the removal of the 5'-leader sequence from pre-tRNA to produce the mature 5'-terminus. It can also cleave other RNA substrates such as 4.5S RNA. The protein component plays an auxiliary but essential role in vivo by binding to the 5'-leader sequence and broadening the substrate specificity of the ribozyme. In Escherichia fergusonii (strain ATCC 35469 / DSM 13698 / CCUG 18766 / IAM 14443 / JCM 21226 / LMG 7866 / NBRC 102419 / NCTC 12128 / CDC 0568-73), this protein is Ribonuclease P protein component.